Here is a 285-residue protein sequence, read N- to C-terminus: NAD kinase (285 aa).

The active-site Proton acceptor is the Asp68. NAD(+) contacts are provided by residues 68 to 69 (DG), 142 to 143 (ND), Arg153, Arg170, Asp172, and Gln242.

Belongs to the NAD kinase family. It depends on a divalent metal cation as a cofactor.

The protein resides in the cytoplasm. The enzyme catalyses NAD(+) + ATP = ADP + NADP(+) + H(+). Involved in the regulation of the intracellular balance of NAD and NADP, and is a key enzyme in the biosynthesis of NADP. Catalyzes specifically the phosphorylation on 2'-hydroxyl of the adenosine moiety of NAD to yield NADP. The polypeptide is NAD kinase (Acidobacterium capsulatum (strain ATCC 51196 / DSM 11244 / BCRC 80197 / JCM 7670 / NBRC 15755 / NCIMB 13165 / 161)).